Consider the following 111-residue polypeptide: Propane 2-monooxygenase, effector component (111 aa).

The protein belongs to the TmoD/XamoD family. As to quaternary structure, the propane 2-monooxygenase multicomponent enzyme system is composed of an electron transfer component and a monooxygenase component interacting with the effector protein PrmD. The electron transfer component is composed of a reductase (PrmB), and the monooxygenase component is formed by a large subunit (PrmA) and a small subunit (PrmC).

Functionally, effector component of the propane 2-monooxygenase multicomponent enzyme system which is involved in the degradation of propane via the O2-dependent hydroxylation of propane. In Gordonia sp. (strain TY-5), this protein is Propane 2-monooxygenase, effector component.